The sequence spans 443 residues: UPF0656 protein C926.02 (443 aa).

Belongs to the UPF0656 family.

The protein localises to the cytoplasm. It is found in the nucleus. In Schizosaccharomyces pombe (strain 972 / ATCC 24843) (Fission yeast), this protein is UPF0656 protein C926.02.